The chain runs to 257 residues: uncharacterized protein (257 aa).

N-linked (GlcNAc...) asparagine; by host glycosylation is found at Asn61, Asn95, Asn102, Asn111, Asn139, Asn148, and Asn152. Residues 233-253 traverse the membrane as a helical segment; that stretch reads WYIIGGIFWVIVLIILVIFII.

The protein localises to the host membrane. It is found in the virion. This is an uncharacterized protein from Acanthamoeba polyphaga (Amoeba).